Reading from the N-terminus, the 188-residue chain is Peptidyl-tRNA hydrolase (188 aa).

Y14 is a tRNA binding site. Catalysis depends on H19, which acts as the Proton acceptor. The tRNA site is built by Y64, N66, and N112.

It belongs to the PTH family. Monomer.

It is found in the cytoplasm. It catalyses the reaction an N-acyl-L-alpha-aminoacyl-tRNA + H2O = an N-acyl-L-amino acid + a tRNA + H(+). Hydrolyzes ribosome-free peptidyl-tRNAs (with 1 or more amino acids incorporated), which drop off the ribosome during protein synthesis, or as a result of ribosome stalling. Functionally, catalyzes the release of premature peptidyl moieties from peptidyl-tRNA molecules trapped in stalled 50S ribosomal subunits, and thus maintains levels of free tRNAs and 50S ribosomes. This chain is Peptidyl-tRNA hydrolase, found in Clostridium perfringens (strain SM101 / Type A).